Here is a 314-residue protein sequence, read N- to C-terminus: tRNA pseudouridine synthase B (314 aa).

Residue aspartate 54 is the Nucleophile of the active site.

It belongs to the pseudouridine synthase TruB family. Type 1 subfamily.

It carries out the reaction uridine(55) in tRNA = pseudouridine(55) in tRNA. In terms of biological role, responsible for synthesis of pseudouridine from uracil-55 in the psi GC loop of transfer RNAs. The sequence is that of tRNA pseudouridine synthase B from Ralstonia nicotianae (strain ATCC BAA-1114 / GMI1000) (Ralstonia solanacearum).